Consider the following 195-residue polypeptide: Imidazoleglycerol-phosphate dehydratase (195 aa).

Belongs to the imidazoleglycerol-phosphate dehydratase family.

It localises to the cytoplasm. The enzyme catalyses D-erythro-1-(imidazol-4-yl)glycerol 3-phosphate = 3-(imidazol-4-yl)-2-oxopropyl phosphate + H2O. It participates in amino-acid biosynthesis; L-histidine biosynthesis; L-histidine from 5-phospho-alpha-D-ribose 1-diphosphate: step 6/9. This Clostridium botulinum (strain Alaska E43 / Type E3) protein is Imidazoleglycerol-phosphate dehydratase.